The sequence spans 178 residues: MAQDQGEKENPMRELRIRKLCLNICVGESGDRLTRAAKVLEQLTGQTPVFSKARYTVRSFGIRRNEKIAVHCTVRGAKAEEILEKGLKVREYELRKNNFSDTGNFGFGIQEHIDLGIKYDPSIGIYGLDFYVVLGRPGFSIADKKRRTGCIGAKHRISKEEAMRWFQQKYDGIILPGK.

Alanine 2 is subject to N-acetylalanine. A Glycyl lysine isopeptide (Lys-Gly) (interchain with G-Cter in SUMO2) cross-link involves residue lysine 38. Phosphothreonine is present on residues threonine 44 and threonine 47. Position 52 is an N6-acetyllysine; alternate (lysine 52). Lysine 52 participates in a covalent cross-link: Glycyl lysine isopeptide (Lys-Gly) (interchain with G-Cter in SUMO2); alternate. Lysine 85 carries the post-translational modification N6-acetyllysine. A Glycyl lysine isopeptide (Lys-Gly) (interchain with G-Cter in SUMO2) cross-link involves residue lysine 154.

It belongs to the universal ribosomal protein uL5 family. In terms of assembly, component of the large ribosomal subunit (LSU). Part of the 5S RNP complex, which is a LSU subcomplex composed of the 5S RNA, RPL5 and RPL11. Component of a hexameric 5S RNP precursor complex, composed of 5S RNA, RRS1, RPF2/BXDC1, RPL5, RPL11 and HEATR3; this complex acts as a precursor for ribosome assembly. Interacts with PML. Interacts with MDM2 (via its RanBP2-type zinc finger domain); negatively regulates MDM2-mediated TP53 ubiquitination and degradation. Interacts with NOP53; retains RPL11 into the nucleolus.

It localises to the nucleus. The protein resides in the nucleolus. The protein localises to the cytoplasm. Functionally, component of the ribosome, a large ribonucleoprotein complex responsible for the synthesis of proteins in the cell. The small ribosomal subunit (SSU) binds messenger RNAs (mRNAs) and translates the encoded message by selecting cognate aminoacyl-transfer RNA (tRNA) molecules. The large subunit (LSU) contains the ribosomal catalytic site termed the peptidyl transferase center (PTC), which catalyzes the formation of peptide bonds, thereby polymerizing the amino acids delivered by tRNAs into a polypeptide chain. The nascent polypeptides leave the ribosome through a tunnel in the LSU and interact with protein factors that function in enzymatic processing, targeting, and the membrane insertion of nascent chains at the exit of the ribosomal tunnel. As part of the 5S RNP/5S ribonucleoprotein particle it is an essential component of the LSU, required for its formation and the maturation of rRNAs. It also couples ribosome biogenesis to p53/TP53 activation. As part of the 5S RNP it accumulates in the nucleoplasm and inhibits MDM2, when ribosome biogenesis is perturbed, mediating the stabilization and the activation of TP53. Promotes nucleolar location of PML. This Oryctolagus cuniculus (Rabbit) protein is Large ribosomal subunit protein uL5 (RPL11).